Reading from the N-terminus, the 113-residue chain is Hydrogenase maturation factor HypA (113 aa).

Position 2 (His-2) interacts with Ni(2+). Residues Cys-73, Cys-76, Cys-89, and Cys-92 each coordinate Zn(2+).

Belongs to the HypA/HybF family.

Involved in the maturation of [NiFe] hydrogenases. Required for nickel insertion into the metal center of the hydrogenase. The polypeptide is Hydrogenase maturation factor HypA (Azotobacter vinelandii).